A 425-amino-acid polypeptide reads, in one-letter code: Tumor necrosis factor receptor superfamily member 16 (425 aa).

The N-terminal stretch at methionine 1–alanine 29 is a signal peptide. Residues lysine 30–isoleucine 253 lie on the Extracellular side of the membrane. TNFR-Cys repeat units follow at residues threonine 32–cysteine 65, proline 67–cysteine 108, arginine 109–cysteine 147, and glutamate 149–cysteine 189. 12 disulfide bridges follow: cysteine 33-cysteine 44, cysteine 45-cysteine 58, cysteine 48-cysteine 65, cysteine 68-cysteine 84, cysteine 87-cysteine 100, cysteine 90-cysteine 108, cysteine 110-cysteine 123, cysteine 126-cysteine 139, cysteine 129-cysteine 147, cysteine 150-cysteine 165, cysteine 168-cysteine 181, and cysteine 171-cysteine 189. N-linked (GlcNAc...) asparagine glycosylation is found at asparagine 61 and asparagine 71. A disordered region spans residues proline 193–valine 225. The span at serine 206–glutamate 215 shows a compositional bias: polar residues. The helical transmembrane segment at proline 254 to lysine 274 threads the bilayer. Topologically, residues arginine 275–valine 425 are cytoplasmic. 2 stretches are compositionally biased toward polar residues: residues asparagine 282–asparagine 292 and serine 306–glycine 327. Residues asparagine 282–glycine 332 are disordered. Serine 312 is subject to Phosphoserine. The interval glycine 327–leucine 342 is mediates interaction with KIDINS220. A Death domain is found at glycine 354–serine 419.

In terms of assembly, homodimer; disulfide-linked. Heterodimer with SORCS2. The extracellular domains of the heterodimer bind NGF. The cytoplasmic region of the heterodimer binds TRIO. NGF binding mediates dissociation of TRIO from the receptor complex. Interacts with RTN4R. Interacts with TRAF2, TRAF4 and TRAF6. Interacts with PTPN13 and RANBP9. Interacts through TRAF6 with SQSTM1 which bridges NGFR to NTRK1. Interacts with BEX1. Interacts with BEX3. Interacts with KIDINS220 and NTRK1. Can form a ternary complex with NTRK1 and KIDINS220 and this complex is affected by the expression levels of KIDINS220. An increase in KIDINS220 expression leads to a decreased association of NGFR and NTRK1. Interacts (via death domain) with RAB31. Interacts with NTRK2; may regulate the ligand specificity of the NTRK2 receptor. Interacts with LINGO1. Interacts with NRADD. Interacts with MAGED1; the interaction antagonizes the association NGFR:NTRK1. Interacts (via death domain) with ARHGDIA and RIPK2. Interacts with BFAR. Post-translationally, subject to intramembrane proteolytic cleavage by the gamma-secretase complex, giving rise to an intracellular fragment that is rapidly degraded via the proteasome. N- and O-glycosylated. In terms of processing, phosphorylated on serine residues.

The protein resides in the cell membrane. Its subcellular location is the cytoplasm. It is found in the perikaryon. The protein localises to the cell projection. It localises to the growth cone. The protein resides in the dendritic spine. Functionally, low affinity receptor which can bind to NGF, BDNF, NTF3, and NTF4. Forms a heterodimeric receptor with SORCS2 that binds the precursor forms of NGF, BDNF and NTF3 with high affinity, and has much lower affinity for mature NGF and BDNF. In response to proNGF binding, the heterodimeric receptor with SORCS2 activates a signaling cascade that leads to decreased Rac activity, reorganization of the actin cytoskeleton and neuronal growth cone collapse. Plays an important role in differentiation and survival of specific neuronal populations during development. Can mediate cell survival as well as cell death of neural cells. Plays a role in the inactivation of RHOA. Plays a role in the regulation of the translocation of GLUT4 to the cell surface in adipocytes and skeletal muscle cells in response to insulin, probably by regulating RAB31 activity, and thereby contributes to the regulation of insulin-dependent glucose uptake. Necessary for the circadian oscillation of the clock genes BMAL1, PER1, PER2 and NR1D1 in the suprachiasmatic nucleus (SCN) of the brain and in liver and of the genes involved in glucose and lipid metabolism in the liver. This chain is Tumor necrosis factor receptor superfamily member 16 (Ngfr), found in Rattus norvegicus (Rat).